We begin with the raw amino-acid sequence, 309 residues long: MTLGNSTEVTEFYLLGFGAQHEFWCILFIVFLLIYVTSIMGNSGIILLINTDSRFQTLTYFFLQHLAFVDICYTSAITPKMLQSFTEEKNLMLFQGCVIQFLVYATFATSDCYLLAMMAVDPYVAICKPLHYTVIMSRTVCIRLVAGSYIMGSINASVQTGFTCSLSFCKSNSINHFFCDVPPILALSCSNVDINIMLLVVFVGSNLIFTGLVVIFSYIYIMATILKMSSSAGRKKSFSTCASHLTAVTIFYGTLSYMYLQSHSNNSQENMKVAFIFYGTVIPMLNPLIYSLRNKEVKEALKVIGKKLF.

The Extracellular portion of the chain corresponds to 1 to 25 (MTLGNSTEVTEFYLLGFGAQHEFWC). An N-linked (GlcNAc...) asparagine glycan is attached at Asn5. A helical membrane pass occupies residues 26-46 (ILFIVFLLIYVTSIMGNSGII). The Cytoplasmic segment spans residues 47 to 54 (LLINTDSR). A helical membrane pass occupies residues 55 to 75 (FQTLTYFFLQHLAFVDICYTS). Residues 76-99 (AITPKMLQSFTEEKNLMLFQGCVI) are Extracellular-facing. Residues Cys97 and Cys189 are joined by a disulfide bond. Residues 100–120 (QFLVYATFATSDCYLLAMMAV) form a helical membrane-spanning segment. At 121 to 133 (DPYVAICKPLHYT) the chain is on the cytoplasmic side. A helical transmembrane segment spans residues 134-154 (VIMSRTVCIRLVAGSYIMGSI). Asn155 is a glycosylation site (N-linked (GlcNAc...) asparagine). Residues 155–196 (NASVQTGFTCSLSFCKSNSINHFFCDVPPILALSCSNVDINI) lie on the Extracellular side of the membrane. The chain crosses the membrane as a helical span at residues 197–217 (MLLVVFVGSNLIFTGLVVIFS). Residues 218 to 237 (YIYIMATILKMSSSAGRKKS) are Cytoplasmic-facing. Residues 238–258 (FSTCASHLTAVTIFYGTLSYM) traverse the membrane as a helical segment. Residues 259–271 (YLQSHSNNSQENM) are Extracellular-facing. N-linked (GlcNAc...) asparagine glycosylation occurs at Asn265. The chain crosses the membrane as a helical span at residues 272–292 (KVAFIFYGTVIPMLNPLIYSL). At 293–309 (RNKEVKEALKVIGKKLF) the chain is on the cytoplasmic side.

This sequence belongs to the G-protein coupled receptor 1 family.

It localises to the cell membrane. Odorant receptor. This is Olfactory receptor 5AK2 (OR5AK2) from Homo sapiens (Human).